The chain runs to 323 residues: MWPLVAALLLGSACCGSAQLLFNKTKSVEFTFCNDTVVIPCFVTNMEAQNTTEVYVKWKFKGRDIYTFDGALNKSTVPTDFSSAKIEVSQLLKGDASLKMDKSDAVSHTGNYTCEVTELTREGETIIELKYRVVSWFSPNENILIVIFPIFAILLFWGQFGIKTLKYRSGGMDEKTIALLVAGLIITVIVIVGAILFVPGEYSLKNATGLGLIVTSTGILILLHYYVFSTAIGLNSFVIAILVIQVIAYILAVVGLSLCIAACIPMHGPLLISGLSILALAQLLGLVYMKFVASNQKTIQPPRKAVEEPLNAFKESKGMMNDE.

The first 18 residues, 1-18 (MWPLVAALLLGSACCGSA), serve as a signal peptide directing secretion. Gln-19 bears the Pyrrolidone carboxylic acid mark. The region spanning 19 to 127 (QLLFNKTKSV…ELTREGETII (109 aa)) is the Ig-like V-type domain. Topologically, residues 19–141 (QLLFNKTKSV…RVVSWFSPNE (123 aa)) are extracellular. Residues Asn-23, Asn-34, Asn-50, and Asn-73 are each glycosylated (N-linked (GlcNAc...) asparagine). 2 disulfide bridges follow: Cys-33/Cys-263 and Cys-41/Cys-114. Ser-89 is subject to Phosphoserine. Asn-111 is a glycosylation site (N-linked (GlcNAc...) asparagine). A helical transmembrane segment spans residues 142–162 (NILIVIFPIFAILLFWGQFGI). Residues 163–176 (KTLKYRSGGMDEKT) are Cytoplasmic-facing. A helical membrane pass occupies residues 177 to 197 (IALLVAGLIITVIVIVGAILF). The Extracellular portion of the chain corresponds to 198-207 (VPGEYSLKNA). Asn-206 carries an N-linked (GlcNAc...) asparagine glycan. The helical transmembrane segment at 208–228 (TGLGLIVTSTGILILLHYYVF) threads the bilayer. At 229 to 235 (STAIGLN) the chain is on the cytoplasmic side. Residues 236–256 (SFVIAILVIQVIAYILAVVGL) traverse the membrane as a helical segment. Residues 257–268 (SLCIAACIPMHG) lie on the Extracellular side of the membrane. A helical membrane pass occupies residues 269-289 (PLLISGLSILALAQLLGLVYM). The Cytoplasmic portion of the chain corresponds to 290–323 (KFVASNQKTIQPPRKAVEEPLNAFKESKGMMNDE).

In terms of assembly, monomer. Interacts with THBS1 (via the C-terminal domain). Interacts with SIRPA. Interacts with FAS/CD95; interaction may be enhanced by functional activation. Interacts with SIRPG, UBQLN1 and UBQLN2. May interact with fibrinogen.

It is found in the cell membrane. In terms of biological role, adhesive protein that mediates cell-to-cell interactions. Acts as a receptor for thrombospondin THBS1 and as modulator of integrin signaling through the activation of heterotrimeric G proteins. Involved in signal transduction, cardiovascular homeostasis, inflammation, apoptosis, angiogenesis, cellular self-renewal, and immunoregulation. Plays a role in modulating pulmonary endothelin EDN1 signaling. Modulates nitrous oxide (NO) signaling, in response to THBS1, hence playing a role as a pressor agent, supporting blood pressure. Plays an important role in memory formation and synaptic plasticity in the hippocampus. Receptor for SIRPA, binding to which prevents maturation of immature dendritic cells and inhibits cytokine production by mature dendritic cells. Interaction with SIRPG mediates cell-cell adhesion, enhances superantigen-dependent T-cell-mediated proliferation and costimulates T-cell activation. Positively modulates FAS-dependent apoptosis in T-cells, perhaps by enhancing FAS clustering. Plays a role in suppressing angiogenesis and may be involved in metabolic dysregulation during normal aging. In response to THBS1, negatively modulates wound healing. Inhibits stem cell self-renewal, in response to THBS1, probably by regulation of the stem cell transcription factors POU5F1/OCT4, SOX2, MYC/c-Myc and KLF4. May play a role in membrane transport and/or integrin dependent signal transduction. May prevent premature elimination of red blood cells. The protein is Leukocyte surface antigen CD47 (CD47) of Pongo abelii (Sumatran orangutan).